Here is a 510-residue protein sequence, read N- to C-terminus: NAD(P)H-quinone oxidoreductase subunit 2 A, chloroplastic (510 aa).

A run of 13 helical transmembrane segments spans residues 24-44, 57-77, 99-119, 124-144, 149-169, 183-203, 227-247, 295-315, 323-343, 354-374, 395-415, 418-438, and 484-504; these read LLLF…GLIL, IPWL…ALLF, IFQF…VEYI, MAIT…MFLC, LITI…LSGY, YLLM…WLYG, PGIS…LSPA, WHLL…LIAI, MLAY…IVGD, YMLF…LFGL, ALSL…AGFF, LYLF…IGLL, and MIVC…IIAI.

This sequence belongs to the complex I subunit 2 family. NDH is composed of at least 16 different subunits, 5 of which are encoded in the nucleus.

It localises to the plastid. The protein localises to the chloroplast thylakoid membrane. The enzyme catalyses a plastoquinone + NADH + (n+1) H(+)(in) = a plastoquinol + NAD(+) + n H(+)(out). It carries out the reaction a plastoquinone + NADPH + (n+1) H(+)(in) = a plastoquinol + NADP(+) + n H(+)(out). NDH shuttles electrons from NAD(P)H:plastoquinone, via FMN and iron-sulfur (Fe-S) centers, to quinones in the photosynthetic chain and possibly in a chloroplast respiratory chain. The immediate electron acceptor for the enzyme in this species is believed to be plastoquinone. Couples the redox reaction to proton translocation, and thus conserves the redox energy in a proton gradient. This chain is NAD(P)H-quinone oxidoreductase subunit 2 A, chloroplastic, found in Solanum bulbocastanum (Wild potato).